A 144-amino-acid polypeptide reads, in one-letter code: UPF0102 protein BMA2801 (144 aa).

The segment at 1–28 (MCHAREASPGTGEPEAAPRDNFPRAAGS) is disordered.

Belongs to the UPF0102 family.

This Burkholderia mallei (strain ATCC 23344) protein is UPF0102 protein BMA2801.